The sequence spans 426 residues: Dihydroorotase (426 aa).

The Zn(2+) site is built by histidine 58 and histidine 60. Residues histidine 60–arginine 62 and asparagine 92 each bind substrate. The Zn(2+) site is built by aspartate 150, histidine 177, and histidine 230. Asparagine 276 provides a ligand contact to substrate. A Zn(2+)-binding site is contributed by aspartate 303. Aspartate 303 is an active-site residue. Substrate-binding positions include histidine 307 and phenylalanine 321 to glycine 322.

Belongs to the metallo-dependent hydrolases superfamily. DHOase family. Class I DHOase subfamily. Zn(2+) is required as a cofactor.

It carries out the reaction (S)-dihydroorotate + H2O = N-carbamoyl-L-aspartate + H(+). The protein operates within pyrimidine metabolism; UMP biosynthesis via de novo pathway; (S)-dihydroorotate from bicarbonate: step 3/3. Functionally, catalyzes the reversible cyclization of carbamoyl aspartate to dihydroorotate. The protein is Dihydroorotase of Listeria monocytogenes serotype 4b (strain F2365).